The primary structure comprises 249 residues: LexA repressor (249 aa).

The interval 1–26 is disordered; it reads MAAQATGGRATQRSQQSPAKPKGLTV. Over residues 9–18 the composition is skewed to polar residues; that stretch reads RATQRSQQSP. Residues 48–68 constitute a DNA-binding region (H-T-H motif); that stretch reads MREIGDTVGLASLSSVTHQLS. Residues Ser173 and Lys210 each act as for autocatalytic cleavage activity in the active site.

Belongs to the peptidase S24 family. In terms of assembly, homodimer.

It carries out the reaction Hydrolysis of Ala-|-Gly bond in repressor LexA.. Functionally, represses a number of genes involved in the response to DNA damage (SOS response), including recA and lexA. In the presence of single-stranded DNA, RecA interacts with LexA causing an autocatalytic cleavage which disrupts the DNA-binding part of LexA, leading to derepression of the SOS regulon and eventually DNA repair. The sequence is that of LexA repressor from Arthrobacter sp. (strain FB24).